Consider the following 633-residue polypeptide: Putative oligopeptide transporter HI_0561 (633 aa).

15 helical membrane-spanning segments follow: residues 8 to 28, 45 to 65, 70 to 90, 128 to 148, 180 to 200, 230 to 250, 281 to 301, 311 to 331, 345 to 365, 379 to 399, 420 to 440, 483 to 503, 515 to 535, 564 to 584, and 604 to 624; these read GVTF…LKFF, SAGT…MGYW, FWQT…FTIP, IAYG…LRVM, IGIV…GVAV, IGVG…MKPM, MIYI…HFIA, ILLV…VAAA, PISG…VSIG, FLTA…CISN, VALI…LEIL, WTYI…DAFL, VIAV…VIVG, LFSA…AFII, and WDTI…VIFA.

It belongs to the oligopeptide OPT transporter family.

The protein resides in the cell membrane. This chain is Putative oligopeptide transporter HI_0561, found in Haemophilus influenzae (strain ATCC 51907 / DSM 11121 / KW20 / Rd).